A 939-amino-acid polypeptide reads, in one-letter code: cGMP-dependent 3',5'-cyclic phosphodiesterase (939 aa).

Gly2 carries the N-myristoyl glycine lipid modification. S-palmitoyl cysteine attachment occurs at residues Cys5 and Cys11. Residues 16–38 (YPAARPAEPRGQQVFLKPDEPPP) are disordered. Ser116 bears the Phosphoserine mark. A disordered region spans residues 197 to 217 (PEAVQNTSVDASEDQKDEKGY). GAF domains follow at residues 236-373 (ATSL…HYTG) and 408-547 (DVSV…GISI). 3',5'-cyclic GMP contacts are provided by Ser430, Asp445, Ile464, Tyr487, and Thr498. Positions 577 to 901 (SDDEYTKLLH…EHWTKVSHKF (325 aa)) constitute a PDEase domain. His655 (proton donor) is an active-site residue. Residues His659, His695, Asp696, and Asp807 each coordinate Zn(2+). Asp696 contributes to the Mg(2+) binding site.

Belongs to the cyclic nucleotide phosphodiesterase family. PDE2 subfamily. In terms of assembly, homodimer. The cofactor is Zn(2+). Requires Mg(2+) as cofactor. As to expression, expressed in brain and liver (at protein level).

It is found in the cytoplasm. The protein localises to the mitochondrion matrix. It localises to the mitochondrion inner membrane. Its subcellular location is the mitochondrion outer membrane. The protein resides in the cell membrane. The enzyme catalyses a nucleoside 3',5'-cyclic phosphate + H2O = a nucleoside 5'-phosphate + H(+). It carries out the reaction 3',5'-cyclic GMP + H2O = GMP + H(+). The catalysed reaction is 3',5'-cyclic AMP + H2O = AMP + H(+). The 3',5'-cyclic-AMP phosphodiesterase activity is stimulated by 3',5'-cyclic GMP. Specifically inhibited by Bay 60-7550. Functionally, cGMP-activated cyclic nucleotide phosphodiesterase with a dual-specificity for the second messengers cAMP and cGMP, which are key regulators of many important physiological processes. Has a higher efficiency with cGMP compared to cAMP. Plays a role in cell growth and migration. Regulates mitochondrial cAMP levels and respiration. Involved in the regulation of mitochondria morphology/dynamics and apoptotic cell death via local modulation of cAMP/PKA signaling in the mitochondrion, including the monitoring of local cAMP levels at the outer mitochondrial membrane and of PKA-dependent phosphorylation of DNM1L. This Mus musculus (Mouse) protein is cGMP-dependent 3',5'-cyclic phosphodiesterase.